Consider the following 1218-residue polypeptide: DNA-directed RNA polymerase subunit beta' (1218 aa).

Zn(2+) contacts are provided by Cys60, Cys62, Cys75, and Cys78. The Mg(2+) site is built by Asp455, Asp457, and Asp459. Zn(2+)-binding residues include Cys824, Cys897, Cys904, and Cys907. Residues 1195 to 1218 (ENEAQSDKSQDEQEIGEITVDMGE) are disordered.

The protein belongs to the RNA polymerase beta' chain family. The RNAP catalytic core consists of 2 alpha, 1 beta, 1 beta' and 1 omega subunit. When a sigma factor is associated with the core the holoenzyme is formed, which can initiate transcription. Mg(2+) serves as cofactor. Zn(2+) is required as a cofactor.

It carries out the reaction RNA(n) + a ribonucleoside 5'-triphosphate = RNA(n+1) + diphosphate. Its function is as follows. DNA-dependent RNA polymerase catalyzes the transcription of DNA into RNA using the four ribonucleoside triphosphates as substrates. The chain is DNA-directed RNA polymerase subunit beta' from Natranaerobius thermophilus (strain ATCC BAA-1301 / DSM 18059 / JW/NM-WN-LF).